We begin with the raw amino-acid sequence, 265 residues long: Hydroxyethylthiazole kinase (265 aa).

Substrate is bound at residue methionine 36. ATP contacts are provided by lysine 112 and serine 160. Glycine 187 contacts substrate.

Belongs to the Thz kinase family. Requires Mg(2+) as cofactor.

The catalysed reaction is 5-(2-hydroxyethyl)-4-methylthiazole + ATP = 4-methyl-5-(2-phosphooxyethyl)-thiazole + ADP + H(+). It participates in cofactor biosynthesis; thiamine diphosphate biosynthesis; 4-methyl-5-(2-phosphoethyl)-thiazole from 5-(2-hydroxyethyl)-4-methylthiazole: step 1/1. In terms of biological role, catalyzes the phosphorylation of the hydroxyl group of 4-methyl-5-beta-hydroxyethylthiazole (THZ). In Clostridium perfringens (strain SM101 / Type A), this protein is Hydroxyethylthiazole kinase.